Here is a 148-residue protein sequence, read N- to C-terminus: Hemoglobin subunit beta (148 aa).

The Globin domain maps to 3-148 (XWTDXERHVI…AVAALGKQYH (146 aa)). Heme b-binding residues include H64 and H93.

It belongs to the globin family. Heterotetramer of two alpha chains and two beta chains. Red blood cells.

Involved in oxygen transport from gills to the various peripheral tissues. This chain is Hemoglobin subunit beta (hbb), found in Silurus asotus (Amur catfish).